A 185-amino-acid chain; its full sequence is HTH-type transcriptional regulator Hpr (185 aa).

The HTH marR-type domain maps to A13–G157. The H-T-H motif DNA-binding region spans I63–E86.

Homodimer.

In terms of biological role, negative regulator of protease production and sporulation. The polypeptide is HTH-type transcriptional regulator Hpr (Bacillus cereus (strain G9842)).